An 886-amino-acid polypeptide reads, in one-letter code: Neurotrophin 1 (886 aa).

The first 29 residues, 1-29 (MKAGRAFGCLFWALLYCVLYLDLVSGNSA), serve as a signal peptide directing secretion. The propeptide occupies 30–498 (DDELMDFDFA…FDDFSLSKKR (469 aa)). Asn267 and Asn317 each carry an N-linked (GlcNAc...) asparagine glycan. The disordered stretch occupies residues 321–340 (FQQPSSQEEEKMASSNGGQS). Asn353 is a glycosylation site (N-linked (GlcNAc...) asparagine). Positions 369–436 (RNSAEETEEP…HKPVVTPPNK (68 aa)) are disordered. One can recognise a Spaetzle domain in the interval 508–597 (MCQSVVRYAR…KVPTCCSCQV (90 aa)). 3 disulfide bridges follow: Cys509–Cys564, Cys546–Cys593, and Cys553–Cys595. Asn623 carries N-linked (GlcNAc...) asparagine glycosylation. Disordered regions lie at residues 675–754 (PGIS…QYHR) and 789–886 (VSAP…QSIQ). Residues 698 to 710 (YKSSSSSSKKYYS) are compositionally biased toward low complexity. Positions 797 to 807 (PAPPLPMPPMP) are enriched in pro residues. Basic residues-rich tracts occupy residues 815–827 (HQAH…HHLH) and 874–886 (SRRH…QSIQ).

In terms of assembly, homodimer; disulfide-linked. As to expression, detected in the fan-shaped body which is a component of the locomotion center in the central nervous system (CNS) (at protein level). Expressed in the optic lobes and brain.

Functionally, neurotrophin which may function as a ligand for the Toll-related receptors Toll-7 and Tollo. Binds to Toll-7 and probably acts as its ligand in promoting motor axon targeting and neuronal survival in the central nervous system (CNS). Involved in synaptic targeting of ISNb/d motorneurons and also some SNa motorneurons. In larvae, involved in the negative regulation of the tracheal immune response to bacterial infection perhaps by acting as a ligand for the Toll-related receptor Tollo. May be involved in the normal development of specific neurons at the neuromuscular junction. The sequence is that of Neurotrophin 1 from Drosophila melanogaster (Fruit fly).